A 131-amino-acid polypeptide reads, in one-letter code: Aspartate 1-decarboxylase (131 aa).

Residue Ser25 is the Schiff-base intermediate with substrate; via pyruvic acid of the active site. A Pyruvic acid (Ser) modification is found at Ser25. Thr57 contributes to the substrate binding site. Catalysis depends on Tyr58, which acts as the Proton donor. Residue 73–75 (GAA) coordinates substrate.

The protein belongs to the PanD family. Heterooctamer of four alpha and four beta subunits. Requires pyruvate as cofactor. Is synthesized initially as an inactive proenzyme, which is activated by self-cleavage at a specific serine bond to produce a beta-subunit with a hydroxyl group at its C-terminus and an alpha-subunit with a pyruvoyl group at its N-terminus.

The protein resides in the cytoplasm. It carries out the reaction L-aspartate + H(+) = beta-alanine + CO2. It functions in the pathway cofactor biosynthesis; (R)-pantothenate biosynthesis; beta-alanine from L-aspartate: step 1/1. In terms of biological role, catalyzes the pyruvoyl-dependent decarboxylation of aspartate to produce beta-alanine. This is Aspartate 1-decarboxylase from Anaeromyxobacter sp. (strain Fw109-5).